The primary structure comprises 446 residues: Dimethylsulfoniopropionate lyase DddP (446 aa).

The span at 1–13 (MNQHYSETRKIDP) shows a compositional bias: basic and acidic residues. Residues 1–30 (MNQHYSETRKIDPSRGATLGDNTPNDNNRI) form a disordered region. Residues Asp-295, Asp-297, Asp-307, His-371, Glu-406, and Glu-421 each coordinate a divalent metal cation.

It belongs to the peptidase M24B family. As to quaternary structure, homodimer. The cofactor is a divalent metal cation.

It carries out the reaction S,S-dimethyl-beta-propiothetin = acrylate + dimethyl sulfide + H(+). In terms of biological role, able to cleave dimethylsulfoniopropionate (DMSP), releasing dimethyl sulfide (DMS). DMS is the principal form by which sulfur is transported from oceans to the atmosphere. The real activity of the protein is however subject to debate and it is unclear whether it constitutes a real dimethylsulfoniopropionate lyase in vivo: the low activity with DMSP as substrate suggests that DMSP is not its native substrate. The sequence is that of Dimethylsulfoniopropionate lyase DddP from Roseovarius nubinhibens (strain ATCC BAA-591 / DSM 15170 / ISM).